The following is a 420-amino-acid chain: Tyrosine--tRNA ligase (420 aa).

Tyr-33 contacts L-tyrosine. The 'HIGH' region motif lies at 38–47; it reads PTADSLHIGH. L-tyrosine is bound by residues Tyr-168 and Gln-172. A 'KMSKS' region motif is present at residues 231–235; it reads KFGKT. An ATP-binding site is contributed by Lys-234. Residues 353 to 419 form the S4 RNA-binding domain; that stretch reads MLLVDALIKV…GKKNYYLVKL (67 aa).

Belongs to the class-I aminoacyl-tRNA synthetase family. TyrS type 1 subfamily. In terms of assembly, homodimer.

The protein localises to the cytoplasm. It catalyses the reaction tRNA(Tyr) + L-tyrosine + ATP = L-tyrosyl-tRNA(Tyr) + AMP + diphosphate + H(+). Its function is as follows. Catalyzes the attachment of tyrosine to tRNA(Tyr) in a two-step reaction: tyrosine is first activated by ATP to form Tyr-AMP and then transferred to the acceptor end of tRNA(Tyr). In Desulfitobacterium hafniense (strain Y51), this protein is Tyrosine--tRNA ligase.